A 346-amino-acid polypeptide reads, in one-letter code: Methylthioribose-1-phosphate isomerase (346 aa).

Substrate contacts are provided by residues 48 to 50 (RGA), R91, and Q200. D241 (proton donor) is an active-site residue. 251 to 252 (NK) is a binding site for substrate.

The protein belongs to the eIF-2B alpha/beta/delta subunits family. MtnA subfamily.

The enzyme catalyses 5-(methylsulfanyl)-alpha-D-ribose 1-phosphate = 5-(methylsulfanyl)-D-ribulose 1-phosphate. Its pathway is amino-acid biosynthesis; L-methionine biosynthesis via salvage pathway; L-methionine from S-methyl-5-thio-alpha-D-ribose 1-phosphate: step 1/6. Its function is as follows. Catalyzes the interconversion of methylthioribose-1-phosphate (MTR-1-P) into methylthioribulose-1-phosphate (MTRu-1-P). The polypeptide is Methylthioribose-1-phosphate isomerase (Picosynechococcus sp. (strain ATCC 27264 / PCC 7002 / PR-6) (Agmenellum quadruplicatum)).